The sequence spans 406 residues: Cysteine--tRNA ligase (406 aa).

C16 is a Zn(2+) binding site. The 'HIGH' region signature appears at 18-28; sequence PTVYSDVHIGN. 3 residues coordinate Zn(2+): C192, H218, and E222. Positions 250 to 254 match the 'KMSKS' region motif; that stretch reads KMAKS. ATP is bound at residue K253.

This sequence belongs to the class-I aminoacyl-tRNA synthetase family. As to quaternary structure, monomer. Zn(2+) is required as a cofactor.

It is found in the cytoplasm. It catalyses the reaction tRNA(Cys) + L-cysteine + ATP = L-cysteinyl-tRNA(Cys) + AMP + diphosphate. The polypeptide is Cysteine--tRNA ligase (Mesomycoplasma hyopneumoniae (strain J / ATCC 25934 / NCTC 10110) (Mycoplasma hyopneumoniae)).